A 132-amino-acid polypeptide reads, in one-letter code: DNA-binding protein inhibitor ID-2 (132 aa).

The 53-residue stretch at 23 to 75 (ARSKTPVDDPMSLLYNMNDCYSKLKELVPSIPQNKKVSKMEILQHVIDYILDL) folds into the bHLH domain. The Nuclear export signal motif lies at 105–114 (LNTDISILSL).

Heterodimer with other HLH proteins.

The protein localises to the cytoplasm. It localises to the nucleus. Transcriptional regulator (lacking a basic DNA binding domain) which negatively regulates the basic helix-loop-helix (bHLH) transcription factors by forming heterodimers and inhibiting their DNA binding and transcriptional activity. Inhibits the activity of both neurogenic (neurod1/neuroD) and myogenic (myod1/myoD) bHLH factors. May play a role in the regulation of the circadian clock. The protein is DNA-binding protein inhibitor ID-2 of Xenopus tropicalis (Western clawed frog).